We begin with the raw amino-acid sequence, 384 residues long: tRNA-specific 2-thiouridylase MnmA (384 aa).

ATP contacts are provided by residues 30–37 (GMSGGVDS) and M56. An interaction with target base in tRNA region spans residues 116–118 (NPD). C121 functions as the Nucleophile in the catalytic mechanism. A disulfide bridge connects residues C121 and C218. Residue G146 participates in ATP binding. Positions 168 to 170 (KDQ) are interaction with tRNA. Catalysis depends on C218, which acts as the Cysteine persulfide intermediate. The interaction with tRNA stretch occupies residues 330 to 331 (RY).

The protein belongs to the MnmA/TRMU family.

The protein resides in the cytoplasm. It catalyses the reaction S-sulfanyl-L-cysteinyl-[protein] + uridine(34) in tRNA + AH2 + ATP = 2-thiouridine(34) in tRNA + L-cysteinyl-[protein] + A + AMP + diphosphate + H(+). Its function is as follows. Catalyzes the 2-thiolation of uridine at the wobble position (U34) of tRNA, leading to the formation of s(2)U34. This chain is tRNA-specific 2-thiouridylase MnmA, found in Haemophilus ducreyi (strain 35000HP / ATCC 700724).